A 367-amino-acid polypeptide reads, in one-letter code: Glutamate 5-kinase (367 aa).

ATP is bound at residue K9. Substrate-binding residues include S49, D136, and N148. Residues 168 to 169 (TD) and 210 to 216 (TGGMKSK) each bind ATP. The 75-residue stretch at 276 to 350 (SGQIEIDAGA…GMQSQQIQAR (75 aa)) folds into the PUA domain.

The protein belongs to the glutamate 5-kinase family.

Its subcellular location is the cytoplasm. The enzyme catalyses L-glutamate + ATP = L-glutamyl 5-phosphate + ADP. It participates in amino-acid biosynthesis; L-proline biosynthesis; L-glutamate 5-semialdehyde from L-glutamate: step 1/2. Functionally, catalyzes the transfer of a phosphate group to glutamate to form L-glutamate 5-phosphate. The chain is Glutamate 5-kinase from Bacillus anthracis.